The primary structure comprises 104 residues: UPF0145 protein VNG_2432C (104 aa).

It belongs to the UPF0145 family.

This is UPF0145 protein VNG_2432C from Halobacterium salinarum (strain ATCC 700922 / JCM 11081 / NRC-1) (Halobacterium halobium).